The chain runs to 271 residues: Ferric vulnibactin reductase VuuB (271 aa).

The FAD-binding FR-type domain occupies 8–131; sequence VYPMLLDFVR…IGPAGPDPLI (124 aa).

The protein belongs to the SIP oxidoreductase family. Monomer. Requires FAD as cofactor.

The protein resides in the cytoplasm. It catalyses the reaction 2 a Fe(II)-siderophore + NAD(+) + H(+) = 2 a Fe(III)-siderophore + NADH. In terms of biological role, ferric-siderophore reductase involved in iron removal from the siderophores after their transport into the cell. Acts as a major ferric-vulnibactin reductase catalyzing the reduction of Fe(3+)-vulnibactin, a catecholate siderophore synthesized by V.vulnificus. This chain is Ferric vulnibactin reductase VuuB, found in Vibrio vulnificus (strain CMCP6).